The chain runs to 158 residues: MVEKVPMTSGGYAALENELKQRQSVDRPRIIEHIAEARSHGDLSENAEYHAAKEEQSHNEGRIAELEDKLARADVIDVTKLSGETIKFGATVTLIDEDTEKKTVWQIVGEVEADAKKGKISITSPLARALIGKKMGTTVEVMAPGGAKSYEIAKVEWR.

A coiled-coil region spans residues 47–74 (AEYHAAKEEQSHNEGRIAELEDKLARAD).

It belongs to the GreA/GreB family.

In terms of biological role, necessary for efficient RNA polymerase transcription elongation past template-encoded arresting sites. The arresting sites in DNA have the property of trapping a certain fraction of elongating RNA polymerases that pass through, resulting in locked ternary complexes. Cleavage of the nascent transcript by cleavage factors such as GreA or GreB allows the resumption of elongation from the new 3'terminus. GreA releases sequences of 2 to 3 nucleotides. The chain is Transcription elongation factor GreA from Bradyrhizobium sp. (strain BTAi1 / ATCC BAA-1182).